The sequence spans 149 residues: Transcriptional repressor NrdR (149 aa).

Residues 3-34 fold into a zinc finger; sequence CPFCTAKDTKVIDSRLVGGGHQVRRRRECNDC. The ATP-cone domain occupies 49–139; it reads PRVIKQDGSR…VYRSFEDIRE (91 aa).

It belongs to the NrdR family. It depends on Zn(2+) as a cofactor.

In terms of biological role, negatively regulates transcription of bacterial ribonucleotide reductase nrd genes and operons by binding to NrdR-boxes. The sequence is that of Transcriptional repressor NrdR from Pseudoalteromonas translucida (strain TAC 125).